The chain runs to 586 residues: Pyruvate kinase (586 aa).

Arg32 is a binding site for substrate. Residues Asn34, Ser36, Asp66, and Thr67 each contribute to the K(+) site. 34 to 37 lines the ATP pocket; it reads NFSH. ATP is bound by residues Arg73 and Lys156. Glu222 serves as a coordination point for Mg(2+). Positions 245, 246, and 278 each coordinate substrate. Asp246 contributes to the Mg(2+) binding site.

Belongs to the pyruvate kinase family. The protein in the C-terminal section; belongs to the PEP-utilizing enzyme family. It depends on Mg(2+) as a cofactor. Requires K(+) as cofactor.

The enzyme catalyses pyruvate + ATP = phosphoenolpyruvate + ADP + H(+). The protein operates within carbohydrate degradation; glycolysis; pyruvate from D-glyceraldehyde 3-phosphate: step 5/5. The polypeptide is Pyruvate kinase (pyk) (Staphylococcus saprophyticus subsp. saprophyticus (strain ATCC 15305 / DSM 20229 / NCIMB 8711 / NCTC 7292 / S-41)).